Reading from the N-terminus, the 73-residue chain is MIEVVCNDRLGKKVRVKCNQEDTIGDLKKLIAAQTGTRWEKIVLKKWYTIFKNHVSLGDYEIHDGMNLELYYL.

The Ubiquitin-like domain occupies 1–73 (MIEVVCNDRL…DGMNLELYYL (73 aa)).

The protein localises to the cytoplasm. This is Ubiquitin-like protein 5 (ubl5) from Danio rerio (Zebrafish).